The chain runs to 421 residues: MSKLTIVRGFNDVLPLDSYKWQLLESKVKLILDRYNYSETRLPIVERSELFHRSVGESSDIVSKETYDFQDRNGDSLTLRPEGTAGCVRMVIENNLATRGQTQKLWYCGPMFRYERPQKGRYRQFYQLGVEAYGFDGIAIDLEVIAIAWSLFKELGIYEYVTLELNSLGSSLNRQEYTQALLQYLKPYHAELDEDSIKRLDKNPLRILDSKIEKTQKILANAPKLIDFIDHDLRLRFKQTCQYLDALGVRYKLNENLVRGLDYYTGLVFEWTTDKLGSQSAICAGGRYDGLVENLGGQKTAAIGFAIGMERLLLLLEDLGKLPNQDNACDVFFILDSAQLHQSLAIVENIRQELPQLKIDMDLKFGSFKSQFKKADKSGAKVAIIIGQDELDNGFAGIKFLQQNEEQQQVAFNELINFLER.

Belongs to the class-II aminoacyl-tRNA synthetase family. In terms of assembly, homodimer.

The protein localises to the cytoplasm. The enzyme catalyses tRNA(His) + L-histidine + ATP = L-histidyl-tRNA(His) + AMP + diphosphate + H(+). This is Histidine--tRNA ligase from Francisella tularensis subsp. tularensis (strain SCHU S4 / Schu 4).